A 199-amino-acid polypeptide reads, in one-letter code: Peroxisomal membrane protein PEX17 (199 aa).

The protein localises to the peroxisome membrane. Functionally, component of the peroxisomal translocation machinery with PEX13 and PEX14. Interacts indirectly with the PTS1 receptor (PAS10/PEX5) and directly binds to PEX14. Required for import of both PTS1 and PTS2 proteins. This is Peroxisomal membrane protein PEX17 (PEX17) from Saccharomyces cerevisiae (strain ATCC 204508 / S288c) (Baker's yeast).